Consider the following 277-residue polypeptide: GATA transcription factor 15 (277 aa).

The interval 52–94 (AYDDHSTVTTSPSSPSSSSTGSVDCTLSLGTPSSRRAEPVAAA) is disordered. Residues 58–74 (TVTTSPSSPSSSSTGSV) are compositionally biased toward low complexity. Residues 154–179 (CANCGTASTPLWRNGPRGPKSLCNAC) form a GATA-type zinc finger.

It belongs to the type IV zinc-finger family. Class B subfamily.

In terms of biological role, probable transcription factor that regulates organogenesis during transition from the vegetative to the reproductive phase. Regulates the expression of CYP78A11/PLA1, HD3A and MADS1 during reproductive development in rice. May act upstream of CYP78A11/PLA1 during panicle development. Acts independently of the photoperiodic and gibberellin signaling pathways. The protein is GATA transcription factor 15 of Oryza sativa subsp. indica (Rice).